The following is a 174-amino-acid chain: Urease accessory protein UreE (174 aa).

The segment at 146-174 (NGAYATGGHAHDHDGEPEHVHGPGCQHAH) is disordered. Residues 154 to 166 (HAHDHDGEPEHVH) show a composition bias toward basic and acidic residues.

Belongs to the UreE family.

Its subcellular location is the cytoplasm. Functionally, involved in urease metallocenter assembly. Binds nickel. Probably functions as a nickel donor during metallocenter assembly. The polypeptide is Urease accessory protein UreE (Albidiferax ferrireducens (strain ATCC BAA-621 / DSM 15236 / T118) (Rhodoferax ferrireducens)).